The sequence spans 153 residues: MKTFSLKPADVEKKWVIIDAEGLVVGRLASIVAMRLRGKHKPQYTPHVDCGDNVIVINADKVKFTGRKYDQKVYYHHTGYPGGIKERSAKFILEGRFPERVVEKAVERMLPRGPLFRKILGNLRVYKGSEHPHAAQQPETLDVAALNRKNVSA.

It belongs to the universal ribosomal protein uL13 family. As to quaternary structure, part of the 50S ribosomal subunit.

In terms of biological role, this protein is one of the early assembly proteins of the 50S ribosomal subunit, although it is not seen to bind rRNA by itself. It is important during the early stages of 50S assembly. This Methylobacterium nodulans (strain LMG 21967 / CNCM I-2342 / ORS 2060) protein is Large ribosomal subunit protein uL13.